A 285-amino-acid chain; its full sequence is Bifunctional protein FolD (285 aa).

NADP(+)-binding positions include 166–168 (GAS) and isoleucine 232.

The protein belongs to the tetrahydrofolate dehydrogenase/cyclohydrolase family. In terms of assembly, homodimer.

The catalysed reaction is (6R)-5,10-methylene-5,6,7,8-tetrahydrofolate + NADP(+) = (6R)-5,10-methenyltetrahydrofolate + NADPH. The enzyme catalyses (6R)-5,10-methenyltetrahydrofolate + H2O = (6R)-10-formyltetrahydrofolate + H(+). It functions in the pathway one-carbon metabolism; tetrahydrofolate interconversion. Catalyzes the oxidation of 5,10-methylenetetrahydrofolate to 5,10-methenyltetrahydrofolate and then the hydrolysis of 5,10-methenyltetrahydrofolate to 10-formyltetrahydrofolate. The chain is Bifunctional protein FolD from Baumannia cicadellinicola subsp. Homalodisca coagulata.